Reading from the N-terminus, the 244-residue chain is Probable transcriptional regulatory protein XF_1906 (244 aa).

The protein belongs to the TACO1 family.

It localises to the cytoplasm. The sequence is that of Probable transcriptional regulatory protein XF_1906 from Xylella fastidiosa (strain 9a5c).